A 90-amino-acid polypeptide reads, in one-letter code: MAKANEHFFYVLKCSDNSYYGGYTTDVMRREAEHNAGIRCKYTKTRRPVKVIHFEKFETRSEATKAEAAFKKLSRKNKDSYLSEREEESK.

One can recognise a GIY-YIG domain in the interval 5 to 80 (NEHFFYVLKC…KKLSRKNKDS (76 aa)).

Belongs to the UPF0213 family.

The chain is UPF0213 protein lin0209 from Listeria innocua serovar 6a (strain ATCC BAA-680 / CLIP 11262).